Consider the following 158-residue polypeptide: Large ribosomal subunit protein uL30 (158 aa).

It belongs to the universal ribosomal protein uL30 family. Part of the 50S ribosomal subunit.

In Saccharolobus islandicus (strain Y.N.15.51 / Yellowstone #2) (Sulfolobus islandicus), this protein is Large ribosomal subunit protein uL30.